The sequence spans 25 residues: uncharacterized protein (25 aa).

This is an uncharacterized protein from Ornithodoros (relapsing fever ticks).